The sequence spans 512 residues: Zinc finger CCCH-type with G patch domain-containing protein (512 aa).

The C3H1-type zinc-finger motif lies at 159–186 (QEMVPCAYFLEGDCKFNDEMCRFSHGEL). Positions 255–280 (LEGDDVPSSDSESNSDSDEENEDDVV) are disordered. The span at 256 to 279 (EGDDVPSSDSESNSDSDEENEDDV) shows a compositional bias: acidic residues. Residues 308–354 (TKGIGSKIMLKMGYVVGAGLGSKGEGIVVPVSAQVLPQGRSLDYCMQ) form the G-patch domain. The span at 407–417 (SSNGSSSSSGS) shows a compositional bias: low complexity. Residues 407–432 (SSNGSSSSSGSKKPAAKDNQMDLPSC) form a disordered region.

It is found in the nucleus. Transcription repressor. In Aedes aegypti (Yellowfever mosquito), this protein is Zinc finger CCCH-type with G patch domain-containing protein.